We begin with the raw amino-acid sequence, 796 residues long: RNA cytosine-C(5)-methyltransferase NSUN2 (796 aa).

The segment covering Met1 to Gln11 has biased composition (basic residues). Residues Met1–Gly36 are disordered. The segment covering Gly22–Gly36 has biased composition (gly residues). S-adenosyl-L-methionine-binding positions include Cys184–Lys190, Asp215, Asp242, and Asp268. The active-site Nucleophile is Cys321. Disordered stretches follow at residues Trp435–Pro501 and Arg707–Asp796. 3 stretches are compositionally biased toward basic and acidic residues: residues Ala467–Gln483, Lys708–Gln721, and Val733–Ala746. The span at Cys774 to Asn783 shows a compositional bias: polar residues. Residues Gln784 to Asp796 are compositionally biased toward basic and acidic residues.

It belongs to the class I-like SAM-binding methyltransferase superfamily. RsmB/NOP family. TRM4 subfamily.

It localises to the nucleus. It is found in the nucleolus. Its subcellular location is the cytoplasm. The protein localises to the mitochondrion. The protein resides in the cytoskeleton. It localises to the spindle. It is found in the secreted. Its subcellular location is the extracellular exosome. The enzyme catalyses cytidine(48) in tRNA + S-adenosyl-L-methionine = 5-methylcytidine(48) in tRNA + S-adenosyl-L-homocysteine + H(+). It catalyses the reaction cytidine(49) in tRNA + S-adenosyl-L-methionine = 5-methylcytidine(49) in tRNA + S-adenosyl-L-homocysteine + H(+). The catalysed reaction is cytidine(50) in tRNA + S-adenosyl-L-methionine = 5-methylcytidine(50) in tRNA + S-adenosyl-L-homocysteine + H(+). It carries out the reaction cytidine(34) in tRNA precursor + S-adenosyl-L-methionine = 5-methylcytidine(34) in tRNA precursor + S-adenosyl-L-homocysteine + H(+). The enzyme catalyses a cytidine in mRNA + S-adenosyl-L-methionine = a 5-methylcytidine in mRNA + S-adenosyl-L-homocysteine + H(+). Its function is as follows. RNA cytosine C(5)-methyltransferase that methylates cytosine to 5-methylcytosine (m5C) in various RNAs, such as tRNAs, mRNAs and some long non-coding RNAs (lncRNAs). Involved in various processes, such as epidermal stem cell differentiation, testis differentiation and maternal to zygotic transition during early development: acts by increasing protein synthesis; cytosine C(5)-methylation promoting tRNA stability and preventing mRNA decay. Methylates cytosine to 5-methylcytosine (m5C) at positions 34 and 48 of intron-containing tRNA(Leu)(CAA) precursors, and at positions 48, 49 and 50 of tRNA(Gly)(GCC) precursors. tRNA methylation is required generation of RNA fragments derived from tRNAs (tRFs). Also mediates C(5)-methylation of mitochondrial tRNAs. Catalyzes cytosine C(5)-methylation of mRNAs, leading to stabilize them and prevent mRNA decay. Cytosine C(5)-methylation of mRNAs also regulates mRNA export. Also mediates cytosine C(5)-methylation of non-coding RNAs, such as vault RNAs (vtRNAs), promoting their processing into regulatory small RNAs. Required for proper spindle assembly and chromosome segregation, independently of its methyltransferase activity. This Gallus gallus (Chicken) protein is RNA cytosine-C(5)-methyltransferase NSUN2.